Consider the following 367-residue polypeptide: MRRVEGYDMIVLMMAVILTCFGVVMVYSASSVMAAKKFHDGFFFLKRQSLYALIGFIGMGVAMHVDYHVWKKWAVPLFLGTFFLLLLVFVPGIGGTAKGASRWIRLPGFNFQPSELAKVALIMYMAYSLEKRQDKLKQFMSGFFPYMLILGVFIAVLLAQHDMGAALTMLAVAIVMLFAAGTKVQYILGMGLVALPGICYLVFTKAYRMRRITAFLDPWQDPTDAGFQIIQSWLALGTGGFFGQGLGEGKQKLFYLPEAHTDFILSVLGEEMGFIGVVVIASMFLLLVQRSIRVAIAAEDSFGRFLAFGIAILLGLEAFVNMAVVTGLLPTKGIALPFLSYGGSSLIISLCSVGVLLNVSTRMRGAA.

The Cytoplasmic segment spans residues 1–8; sequence MRRVEGYD. Residues 9 to 29 traverse the membrane as a helical segment; it reads MIVLMMAVILTCFGVVMVYSA. The Periplasmic portion of the chain corresponds to 30 to 49; that stretch reads SSVMAAKKFHDGFFFLKRQS. The helical transmembrane segment at 50–70 threads the bilayer; it reads LYALIGFIGMGVAMHVDYHVW. At 71-72 the chain is on the cytoplasmic side; sequence KK. A helical membrane pass occupies residues 73 to 93; it reads WAVPLFLGTFFLLLLVFVPGI. At 94 to 138 the chain is on the periplasmic side; sequence GGTAKGASRWIRLPGFNFQPSELAKVALIMYMAYSLEKRQDKLKQ. The helical transmembrane segment at 139–159 threads the bilayer; it reads FMSGFFPYMLILGVFIAVLLA. The Cytoplasmic segment spans residues 160–161; sequence QH. The helical transmembrane segment at 162-182 threads the bilayer; that stretch reads DMGAALTMLAVAIVMLFAAGT. Residue Lys-183 is a topological domain, periplasmic. A helical transmembrane segment spans residues 184-204; it reads VQYILGMGLVALPGICYLVFT. Residues 205–225 lie on the Cytoplasmic side of the membrane; the sequence is KAYRMRRITAFLDPWQDPTDA. The helical transmembrane segment at 226 to 246 threads the bilayer; that stretch reads GFQIIQSWLALGTGGFFGQGL. Over 247 to 266 the chain is Periplasmic; that stretch reads GEGKQKLFYLPEAHTDFILS. The chain crosses the membrane as a helical span at residues 267-287; it reads VLGEEMGFIGVVVIASMFLLL. At 288–304 the chain is on the cytoplasmic side; sequence VQRSIRVAIAAEDSFGR. Residues 305–325 form a helical membrane-spanning segment; the sequence is FLAFGIAILLGLEAFVNMAVV. Residues 326–335 are Periplasmic-facing; it reads TGLLPTKGIA. The helical transmembrane segment at 336–356 threads the bilayer; it reads LPFLSYGGSSLIISLCSVGVL. Residues 357 to 367 lie on the Cytoplasmic side of the membrane; the sequence is LNVSTRMRGAA.

Belongs to the SEDS family. FtsW subfamily.

It is found in the cell inner membrane. It carries out the reaction [GlcNAc-(1-&gt;4)-Mur2Ac(oyl-L-Ala-gamma-D-Glu-L-Lys-D-Ala-D-Ala)](n)-di-trans,octa-cis-undecaprenyl diphosphate + beta-D-GlcNAc-(1-&gt;4)-Mur2Ac(oyl-L-Ala-gamma-D-Glu-L-Lys-D-Ala-D-Ala)-di-trans,octa-cis-undecaprenyl diphosphate = [GlcNAc-(1-&gt;4)-Mur2Ac(oyl-L-Ala-gamma-D-Glu-L-Lys-D-Ala-D-Ala)](n+1)-di-trans,octa-cis-undecaprenyl diphosphate + di-trans,octa-cis-undecaprenyl diphosphate + H(+). Its pathway is cell wall biogenesis; peptidoglycan biosynthesis. Peptidoglycan polymerase that is essential for cell division. The sequence is that of Probable peptidoglycan glycosyltransferase FtsW from Geobacter sp. (strain M18).